We begin with the raw amino-acid sequence, 296 residues long: DNA repair protein complementing XP-A cells homolog (296 aa).

Polar residues predominate over residues 1–10 (MSAEVSTNES). The tract at residues 1 to 39 (MSAEVSTNESAPPAEKKSKLTNAQKARIERNQAKAQKLR) is disordered. Residues 26–39 (ARIERNQAKAQKLR) are compositionally biased toward basic and acidic residues. The Nuclear localization signal signature appears at 26 to 47 (ARIERNQAKAQKLREAKLVSHP). Zn(2+) contacts are provided by C126, C129, C147, and C150. A zinc finger spans residues 126 to 150 (CLECGDMFADSYLFNNFGHSVCDKC).

This sequence belongs to the XPA family. As to expression, strongly expressed in the central nervous system and muscles.

It localises to the nucleus. Involved in DNA excision repair. Initiates repair by binding to damaged sites with various affinities, depending on the photoproduct and the transcriptional state of the region. The sequence is that of DNA repair protein complementing XP-A cells homolog (Xpac) from Drosophila melanogaster (Fruit fly).